We begin with the raw amino-acid sequence, 99 residues long: UPF0235 protein PM1313 (99 aa).

The protein belongs to the UPF0235 family.

In Pasteurella multocida (strain Pm70), this protein is UPF0235 protein PM1313.